We begin with the raw amino-acid sequence, 585 residues long: Proline--tRNA ligase (585 aa).

This sequence belongs to the class-II aminoacyl-tRNA synthetase family. ProS type 1 subfamily. Homodimer.

It is found in the cytoplasm. It catalyses the reaction tRNA(Pro) + L-proline + ATP = L-prolyl-tRNA(Pro) + AMP + diphosphate. Its function is as follows. Catalyzes the attachment of proline to tRNA(Pro) in a two-step reaction: proline is first activated by ATP to form Pro-AMP and then transferred to the acceptor end of tRNA(Pro). As ProRS can inadvertently accommodate and process non-cognate amino acids such as alanine and cysteine, to avoid such errors it has two additional distinct editing activities against alanine. One activity is designated as 'pretransfer' editing and involves the tRNA(Pro)-independent hydrolysis of activated Ala-AMP. The other activity is designated 'posttransfer' editing and involves deacylation of mischarged Ala-tRNA(Pro). The misacylated Cys-tRNA(Pro) is not edited by ProRS. This chain is Proline--tRNA ligase, found in Acidobacterium capsulatum (strain ATCC 51196 / DSM 11244 / BCRC 80197 / JCM 7670 / NBRC 15755 / NCIMB 13165 / 161).